Here is a 314-residue protein sequence, read N- to C-terminus: Methionyl-tRNA formyltransferase (314 aa).

Residue 110-113 coordinates (6S)-5,6,7,8-tetrahydrofolate; the sequence is SLLP.

The protein belongs to the Fmt family.

It catalyses the reaction L-methionyl-tRNA(fMet) + (6R)-10-formyltetrahydrofolate = N-formyl-L-methionyl-tRNA(fMet) + (6S)-5,6,7,8-tetrahydrofolate + H(+). In terms of biological role, attaches a formyl group to the free amino group of methionyl-tRNA(fMet). The formyl group appears to play a dual role in the initiator identity of N-formylmethionyl-tRNA by promoting its recognition by IF2 and preventing the misappropriation of this tRNA by the elongation apparatus. The polypeptide is Methionyl-tRNA formyltransferase (Bacillus cytotoxicus (strain DSM 22905 / CIP 110041 / 391-98 / NVH 391-98)).